We begin with the raw amino-acid sequence, 335 residues long: Phosphate acyltransferase (335 aa).

This sequence belongs to the PlsX family. In terms of assembly, homodimer. Probably interacts with PlsY.

It localises to the cytoplasm. It catalyses the reaction a fatty acyl-[ACP] + phosphate = an acyl phosphate + holo-[ACP]. The protein operates within lipid metabolism; phospholipid metabolism. Catalyzes the reversible formation of acyl-phosphate (acyl-PO(4)) from acyl-[acyl-carrier-protein] (acyl-ACP). This enzyme utilizes acyl-ACP as fatty acyl donor, but not acyl-CoA. This is Phosphate acyltransferase from Streptococcus equi subsp. equi (strain 4047).